The primary structure comprises 223 residues: Lipoprotein-releasing system ATP-binding protein LolD (223 aa).

Residues 2 to 223 (IQVRNLKKTF…LRDGEIVTCA (222 aa)) enclose the ABC transporter domain. 38-45 (GVSGAGKT) is a binding site for ATP.

The protein belongs to the ABC transporter superfamily. Lipoprotein translocase (TC 3.A.1.125) family. In terms of assembly, the complex is composed of two ATP-binding proteins (LolD) and two transmembrane proteins (LolC and LolE).

The protein resides in the cell inner membrane. In terms of biological role, part of the ABC transporter complex LolCDE involved in the translocation of mature outer membrane-directed lipoproteins, from the inner membrane to the periplasmic chaperone, LolA. Responsible for the formation of the LolA-lipoprotein complex in an ATP-dependent manner. This Syntrophus aciditrophicus (strain SB) protein is Lipoprotein-releasing system ATP-binding protein LolD.